We begin with the raw amino-acid sequence, 431 residues long: UPF0597 protein TDE_2144 (431 aa).

It belongs to the UPF0597 family.

The sequence is that of UPF0597 protein TDE_2144 from Treponema denticola (strain ATCC 35405 / DSM 14222 / CIP 103919 / JCM 8153 / KCTC 15104).